A 670-amino-acid polypeptide reads, in one-letter code: Neutral ceramidase (670 aa).

Positions 1 to 24 (MSRSAFTALLLSCVLLALSMPARA) are cleaved as a signal peptide. H61 contributes to the Mg(2+) binding site. Substrate-binding residues include N84, Q92, and D111. H121 contacts Zn(2+). A substrate-binding site is contributed by S130. H228 is a binding site for Zn(2+). Catalysis depends on S274, which acts as the Nucleophile. C346 and C394 are oxidised to a cystine. A Zn(2+)-binding site is contributed by E435. Y469 contacts substrate. Residue Y472 participates in Zn(2+) binding. D603, D605, and T608 together coordinate Mg(2+). Residues 644–670 (NAKNFWTQKISEIGGSTRSFEVLGTTP) form a required for correct folding and localization region.

The protein belongs to the neutral ceramidase family. In terms of assembly, homodimer. Zn(2+) is required as a cofactor. Requires Mg(2+) as cofactor.

It is found in the secreted. The catalysed reaction is an N-acylsphing-4-enine + H2O = sphing-4-enine + a fatty acid. Inhibited by EDTA, EGTA and D/L-sphinganine D-erythro-sphingosine. L-erythro-sphingosine is a less powerful inhibitor. Stimulated by glycerophospholipids: cardiolipin is the most effective, followed by phosphatidic acid, phosphatidylethanolamine and phosphatidylglycerol, whereas phosphatidylcholine, lysophosphatidic acid and diacylglycerol are less effective. Functionally, catalyzes the cleavage of the N-acyl linkage of the ceramides (Cers) to yield sphingosine (Sph) and free fatty acid at an optimal pH of 8-9. Also catalyzes the synthesis of Cers from Sph and fatty acid. The sequence is that of Neutral ceramidase from Pseudomonas aeruginosa (strain ATCC 15692 / DSM 22644 / CIP 104116 / JCM 14847 / LMG 12228 / 1C / PRS 101 / PAO1).